Reading from the N-terminus, the 463-residue chain is tRNA modification GTPase MnmE (463 aa).

Residues Arg30, Glu92, and Arg132 each contribute to the (6S)-5-formyl-5,6,7,8-tetrahydrofolate site. A TrmE-type G domain is found at Gly227–Gly386. A K(+)-binding site is contributed by Asn237. GTP-binding positions include Asn237–Ser242, Thr256–Thr262, Asp281–Gly284, and Asn342–Asp345. Ser241 is a Mg(2+) binding site. K(+) contacts are provided by Thr256, Leu258, and Thr261. Residue Thr262 coordinates Mg(2+). Lys463 contributes to the (6S)-5-formyl-5,6,7,8-tetrahydrofolate binding site.

Belongs to the TRAFAC class TrmE-Era-EngA-EngB-Septin-like GTPase superfamily. TrmE GTPase family. Homodimer. Heterotetramer of two MnmE and two MnmG subunits. K(+) serves as cofactor.

It localises to the cytoplasm. Its function is as follows. Exhibits a very high intrinsic GTPase hydrolysis rate. Involved in the addition of a carboxymethylaminomethyl (cmnm) group at the wobble position (U34) of certain tRNAs, forming tRNA-cmnm(5)s(2)U34. This Synechococcus sp. (strain CC9311) protein is tRNA modification GTPase MnmE.